The sequence spans 367 residues: AA9 family lytic polysaccharide monooxygenase A (367 aa).

The first 20 residues, 1-20 (MKSSTFGMLALAAAAKLVSA), serve as a signal peptide directing secretion. His-21 serves as a coordination point for Cu(2+). The interval 37-56 (GNSESGYIRSPPSNSPITDV) is disordered. A disulfide bond links Cys-63 and Cys-183. His-102 serves as a coordination point for Cu(2+). His-169 contacts O2. Residue Tyr-180 coordinates Cu(2+). Residues 234 to 287 (GASGSSSSPSASASASAPAATSAAPAPSSFTTIAKQPATSSTEAPSTENTSTTS) are disordered. 2 stretches are compositionally biased toward low complexity: residues 235–262 (ASGSSSSPSASASASAPAATSAAPAPSS) and 270–287 (PATSSTEAPSTENTSTTS). N-linked (GlcNAc...) asparagine glycosylation is present at Asn-282. Residues 329-365 (GAVKEWYQCGGLNYKGSTQCEEGLTCKKWNPYYYQCI) enclose the CBM1 domain.

Belongs to the polysaccharide monooxygenase AA9 family. Requires Cu(2+) as cofactor.

The protein resides in the secreted. The enzyme catalyses [(1-&gt;4)-beta-D-glucosyl]n+m + reduced acceptor + O2 = 4-dehydro-beta-D-glucosyl-[(1-&gt;4)-beta-D-glucosyl]n-1 + [(1-&gt;4)-beta-D-glucosyl]m + acceptor + H2O.. Functionally, lytic polysaccharide monooxygenase (LPMO) that depolymerizes crystalline and amorphous polysaccharides via the oxidation of scissile alpha- or beta-(1-4)-glycosidic bonds, yielding C4 oxidation products. Catalysis by LPMOs requires the reduction of the active-site copper from Cu(II) to Cu(I) by a reducing agent and H(2)O(2) or O(2) as a cosubstrate. Active on cellulose and cello-oligosaccharides, as well as plant cell wall-derived hemicellulosic polysaccharides. Also active on cello-oligosaccharides such as cellohexaose, cellopentaose or cellotetraose. In Aspergillus oryzae (strain ATCC 42149 / RIB 40) (Yellow koji mold), this protein is AA9 family lytic polysaccharide monooxygenase A.